A 127-amino-acid polypeptide reads, in one-letter code: Prophage antitermination protein Q homolog QuuD (127 aa).

This sequence belongs to the phage antitermination Q type 1 family.

Positively regulate expression of some phage genes. Bacterial host RNA polymerase modified by antitermination proteins transcribes through termination sites that otherwise prevent expression of the regulated genes. This is Prophage antitermination protein Q homolog QuuD (quuD) from Escherichia coli (strain K12).